Reading from the N-terminus, the 70-residue chain is ATP synthase subunit c (70 aa).

2 consecutive transmembrane segments (helical) span residues 4–24 (IAAAIAIGLSALGAGIGNGLI) and 45–65 (IMFIGVGLVEALPIIGVVIAF).

Belongs to the ATPase C chain family. In terms of assembly, F-type ATPases have 2 components, F(1) - the catalytic core - and F(0) - the membrane proton channel. F(1) has five subunits: alpha(3), beta(3), gamma(1), delta(1), epsilon(1). F(0) has three main subunits: a(1), b(2) and c(10-14). The alpha and beta chains form an alternating ring which encloses part of the gamma chain. F(1) is attached to F(0) by a central stalk formed by the gamma and epsilon chains, while a peripheral stalk is formed by the delta and b chains.

The protein resides in the cell membrane. In terms of biological role, f(1)F(0) ATP synthase produces ATP from ADP in the presence of a proton or sodium gradient. F-type ATPases consist of two structural domains, F(1) containing the extramembraneous catalytic core and F(0) containing the membrane proton channel, linked together by a central stalk and a peripheral stalk. During catalysis, ATP synthesis in the catalytic domain of F(1) is coupled via a rotary mechanism of the central stalk subunits to proton translocation. Key component of the F(0) channel; it plays a direct role in translocation across the membrane. A homomeric c-ring of between 10-14 subunits forms the central stalk rotor element with the F(1) delta and epsilon subunits. In Staphylococcus aureus (strain Mu3 / ATCC 700698), this protein is ATP synthase subunit c.